The following is a 272-amino-acid chain: Ribonuclease HII (272 aa).

The RNase H type-2 domain occupies 30–221; sequence GPVAGVDEVG…VRRAAEATGV (192 aa). Residues Asp-36, Glu-37, and Asp-130 each coordinate a divalent metal cation.

Belongs to the RNase HII family. It depends on Mn(2+) as a cofactor. Requires Mg(2+) as cofactor.

The protein resides in the cytoplasm. The catalysed reaction is Endonucleolytic cleavage to 5'-phosphomonoester.. Functionally, endonuclease that specifically degrades the RNA of RNA-DNA hybrids. The protein is Ribonuclease HII of Mycolicibacterium smegmatis (strain ATCC 700084 / mc(2)155) (Mycobacterium smegmatis).